The chain runs to 528 residues: Phosphoenolpyruvate carboxykinase (ATP) (528 aa).

Substrate is bound by residues arginine 56, tyrosine 192, and lysine 198. ATP contacts are provided by residues lysine 198, histidine 217, and 233–241 (GLSGTGKTT). 2 residues coordinate Mn(2+): lysine 198 and histidine 217. Mn(2+) is bound at residue aspartate 254. Residues glutamate 282, arginine 319, and threonine 444 each coordinate ATP. Arginine 319 is a substrate binding site.

Belongs to the phosphoenolpyruvate carboxykinase (ATP) family. Requires Mn(2+) as cofactor.

It is found in the cytoplasm. The enzyme catalyses oxaloacetate + ATP = phosphoenolpyruvate + ADP + CO2. It functions in the pathway carbohydrate biosynthesis; gluconeogenesis. Functionally, involved in the gluconeogenesis. Catalyzes the conversion of oxaloacetate (OAA) to phosphoenolpyruvate (PEP) through direct phosphoryl transfer between the nucleoside triphosphate and OAA. The sequence is that of Phosphoenolpyruvate carboxykinase (ATP) from Bacillus anthracis (strain A0248).